We begin with the raw amino-acid sequence, 272 residues long: Phosphoglycolate phosphatase (272 aa).

Aspartate 19 serves as the catalytic Nucleophile. Mg(2+)-binding residues include aspartate 19, aspartate 21, and aspartate 182.

It belongs to the HAD-like hydrolase superfamily. CbbY/CbbZ/Gph/YieH family. The cofactor is Mg(2+).

The enzyme catalyses 2-phosphoglycolate + H2O = glycolate + phosphate. It participates in organic acid metabolism; glycolate biosynthesis; glycolate from 2-phosphoglycolate: step 1/1. Specifically catalyzes the dephosphorylation of 2-phosphoglycolate. Is involved in the dissimilation of the intracellular 2-phosphoglycolate formed during the DNA repair of 3'-phosphoglycolate ends, a major class of DNA lesions induced by oxidative stress. In Pseudomonas syringae pv. syringae (strain B728a), this protein is Phosphoglycolate phosphatase.